Consider the following 232-residue polypeptide: Large ribosomal subunit protein uL1 (232 aa).

This sequence belongs to the universal ribosomal protein uL1 family. As to quaternary structure, part of the 50S ribosomal subunit.

Binds directly to 23S rRNA. The L1 stalk is quite mobile in the ribosome, and is involved in E site tRNA release. In terms of biological role, protein L1 is also a translational repressor protein, it controls the translation of the L11 operon by binding to its mRNA. This chain is Large ribosomal subunit protein uL1, found in Lysinibacillus sphaericus (strain C3-41).